A 601-amino-acid polypeptide reads, in one-letter code: Aspartate--tRNA ligase (601 aa).

Position 183 (Glu-183) interacts with L-aspartate. The aspartate stretch occupies residues 207 to 210; sequence QIFK. L-aspartate is bound at residue Arg-229. Residues 229–231 and Gln-238 contribute to the ATP site; that span reads RDE. His-457 contacts L-aspartate. Glu-497 serves as a coordination point for ATP. Arg-504 serves as a coordination point for L-aspartate. 549 to 552 contacts ATP; that stretch reads GIDR.

The protein belongs to the class-II aminoacyl-tRNA synthetase family. Type 1 subfamily. As to quaternary structure, homodimer.

The protein localises to the cytoplasm. The catalysed reaction is tRNA(Asp) + L-aspartate + ATP = L-aspartyl-tRNA(Asp) + AMP + diphosphate. Its function is as follows. Catalyzes the attachment of L-aspartate to tRNA(Asp) in a two-step reaction: L-aspartate is first activated by ATP to form Asp-AMP and then transferred to the acceptor end of tRNA(Asp). The sequence is that of Aspartate--tRNA ligase from Leptospira interrogans serogroup Icterohaemorrhagiae serovar Lai (strain 56601).